Here is a 378-residue protein sequence, read N- to C-terminus: Putative glutamate--cysteine ligase 2 (378 aa).

It belongs to the glutamate--cysteine ligase type 2 family. YbdK subfamily.

The enzyme catalyses L-cysteine + L-glutamate + ATP = gamma-L-glutamyl-L-cysteine + ADP + phosphate + H(+). Its function is as follows. ATP-dependent carboxylate-amine ligase which exhibits weak glutamate--cysteine ligase activity. The chain is Putative glutamate--cysteine ligase 2 from Salinispora tropica (strain ATCC BAA-916 / DSM 44818 / JCM 13857 / NBRC 105044 / CNB-440).